The following is a 485-amino-acid chain: Ribosomal protein uS12 methylthiotransferase RimO (485 aa).

Residues 19-135 (VKVGFISLGC…IGEVVAGILA (117 aa)) enclose the MTTase N-terminal domain. Positions 28, 64, 98, 172, 176, and 179 each coordinate [4Fe-4S] cluster. The region spanning 158–387 (ATPGYTAYLK…MEVQQEIARR (230 aa)) is the Radical SAM core domain. The TRAM domain occupies 390-461 (QLQVGRELEV…DYDLLGEATE (72 aa)).

Belongs to the methylthiotransferase family. RimO subfamily. [4Fe-4S] cluster serves as cofactor.

Its subcellular location is the cytoplasm. The enzyme catalyses L-aspartate(89)-[ribosomal protein uS12]-hydrogen + (sulfur carrier)-SH + AH2 + 2 S-adenosyl-L-methionine = 3-methylsulfanyl-L-aspartate(89)-[ribosomal protein uS12]-hydrogen + (sulfur carrier)-H + 5'-deoxyadenosine + L-methionine + A + S-adenosyl-L-homocysteine + 2 H(+). Its function is as follows. Catalyzes the methylthiolation of an aspartic acid residue of ribosomal protein uS12. In Symbiobacterium thermophilum (strain DSM 24528 / JCM 14929 / IAM 14863 / T), this protein is Ribosomal protein uS12 methylthiotransferase RimO.